Consider the following 286-residue polypeptide: Probable protein S-acyltransferase 16 (286 aa).

2 helical membrane passes run Pro11–Ile31 and Asn45–Phe65. In terms of domain architecture, DHHC spans Arg97–Val147. The S-palmitoyl cysteine intermediate role is filled by Cys127. 2 helical membrane passes run Val141–Val161 and Ile182–Gly202.

Belongs to the DHHC palmitoyltransferase family.

The protein resides in the golgi apparatus membrane. The catalysed reaction is L-cysteinyl-[protein] + hexadecanoyl-CoA = S-hexadecanoyl-L-cysteinyl-[protein] + CoA. Palmitoyl acyltransferase. The polypeptide is Probable protein S-acyltransferase 16 (PAT16) (Arabidopsis thaliana (Mouse-ear cress)).